Here is a 537-residue protein sequence, read N- to C-terminus: O-phosphoserine--tRNA(Cys) ligase (537 aa).

Substrate is bound by residues 186–188 (HMT), 231–233 (SAS), 273–274 (YY), and Asn317.

Belongs to the class-II aminoacyl-tRNA synthetase family. O-phosphoseryl-tRNA(Cys) synthetase subfamily. As to quaternary structure, homotetramer. Interacts with SepCysS.

It carries out the reaction tRNA(Cys) + O-phospho-L-serine + ATP = O-phospho-L-seryl-tRNA(Cys) + AMP + diphosphate. In terms of biological role, catalyzes the attachment of O-phosphoserine (Sep) to tRNA(Cys). The chain is O-phosphoserine--tRNA(Cys) ligase from Methanococcus vannielii (strain ATCC 35089 / DSM 1224 / JCM 13029 / OCM 148 / SB).